The sequence spans 553 residues: Zinc finger protein 426 (553 aa).

The KRAB domain maps to 40-111 (VSFDDVIVDF…KIVFPEWKIQ (72 aa)). C2H2-type zinc fingers lie at residues 222–244 (FECS…QRTH), 277–299 (HRCK…MRTH), 305–327 (YECK…GRTH), 333–355 (YVCN…VRSH), 361–383 (YACK…IRTH), 389–411 (FVCV…LKMH), 417–439 (CECK…MRTH), 445–467 (YTCK…MRIH), 473–495 (YECK…ERTH), 501–525 (YECK…SHTH), and 531–553 (YKCQ…ERIH).

Its subcellular location is the nucleus. Its function is as follows. May be involved in transcriptional regulation. The protein is Zinc finger protein 426 (Znf426) of Rattus norvegicus (Rat).